We begin with the raw amino-acid sequence, 275 residues long: Stage 0 sporulation protein YaaT (275 aa).

Residues 61-146 (RKVIRVADDR…FKTRIELRQI (86 aa)) enclose the PSP1 C-terminal domain.

Its subcellular location is the cytoplasm. Its function is as follows. Essential for the phosphorelay during initiation of sporulation. May control the level of phosphorylated spo0A through spo0E activity during sporulation. This Bacillus subtilis (strain 168) protein is Stage 0 sporulation protein YaaT (yaaT).